A 474-amino-acid polypeptide reads, in one-letter code: Flotillin-like protein 3 (474 aa).

The S-palmitoyl cysteine moiety is linked to residue Cys35. Coiled-coil stretches lie at residues 235 to 255 (ENQR…KKAA) and 305 to 325 (QYET…KEAE).

This sequence belongs to the band 7/mec-2 family. Flotillin subfamily. In terms of processing, may be palmitoylated. As to expression, expressed in all plant organs. Primarily expressed in vascular tissues. No change in spatial expression in root upon inoculation. Expression limited to the nodule vascular tissue.

Its subcellular location is the cell membrane. The protein resides in the membrane. It is found in the caveola. Functionally, may act as a scaffolding protein within caveolar membranes, functionally participating in formation of caveolae or caveolae-like vesicles. May be involved in nodule formation. This is Flotillin-like protein 3 (FLOT3) from Medicago truncatula (Barrel medic).